Reading from the N-terminus, the 344-residue chain is Anthranilate phosphoribosyltransferase (344 aa).

5-phospho-alpha-D-ribose 1-diphosphate is bound by residues Gly84, 87 to 88, Ser92, 94 to 97, 112 to 120, and Ser124; these read GD, NIST, and KHGNRSASG. Gly84 is an anthranilate binding site. Ser96 serves as a coordination point for Mg(2+). Asn115 serves as a coordination point for anthranilate. Arg170 is a binding site for anthranilate. 2 residues coordinate Mg(2+): Asp229 and Glu230.

This sequence belongs to the anthranilate phosphoribosyltransferase family. In terms of assembly, homodimer. It depends on Mg(2+) as a cofactor.

The enzyme catalyses N-(5-phospho-beta-D-ribosyl)anthranilate + diphosphate = 5-phospho-alpha-D-ribose 1-diphosphate + anthranilate. It functions in the pathway amino-acid biosynthesis; L-tryptophan biosynthesis; L-tryptophan from chorismate: step 2/5. Catalyzes the transfer of the phosphoribosyl group of 5-phosphorylribose-1-pyrophosphate (PRPP) to anthranilate to yield N-(5'-phosphoribosyl)-anthranilate (PRA). In Synechococcus sp. (strain RCC307), this protein is Anthranilate phosphoribosyltransferase.